A 228-amino-acid chain; its full sequence is Ribulose-phosphate 3-epimerase, cytoplasmic isoform (228 aa).

Ser12 provides a ligand contact to substrate. His37, Asp39, and His70 together coordinate a divalent metal cation. Asp39 functions as the Proton acceptor in the catalytic mechanism. Substrate-binding positions include His70, 150 to 153, 179 to 181, and 201 to 202; these read GFGG, DGG, and GS. Asp179 is an a divalent metal cation binding site. Catalysis depends on Asp179, which acts as the Proton donor.

The protein belongs to the ribulose-phosphate 3-epimerase family. In terms of assembly, homodimer. Requires Co(2+) as cofactor. Fe(2+) serves as cofactor. It depends on Mn(2+) as a cofactor. Zn(2+) is required as a cofactor. Predominantly accumulates in roots and seedlings.

The protein localises to the cytoplasm. The enzyme catalyses D-ribulose 5-phosphate = D-xylulose 5-phosphate. Its pathway is carbohydrate degradation; pentose phosphate pathway; D-xylulose 5-phosphate from D-ribulose 5-phosphate (non-oxidative stage): step 1/1. In terms of biological role, catalyzes the reversible epimerization of D-ribulose 5-phosphate to D-xylulose 5-phosphate. The sequence is that of Ribulose-phosphate 3-epimerase, cytoplasmic isoform from Oryza sativa subsp. japonica (Rice).